Here is a 229-residue protein sequence, read N- to C-terminus: Phosphoglycolate phosphatase (229 aa).

The Nucleophile role is filled by D18. Residues D18, D20, and D176 each coordinate Mg(2+).

This sequence belongs to the HAD-like hydrolase superfamily. CbbY/CbbZ/Gph/YieH family. Requires Mg(2+) as cofactor.

It catalyses the reaction 2-phosphoglycolate + H2O = glycolate + phosphate. It functions in the pathway organic acid metabolism; glycolate biosynthesis; glycolate from 2-phosphoglycolate: step 1/1. Its function is as follows. Specifically catalyzes the dephosphorylation of 2-phosphoglycolate. Is involved in the dissimilation of the intracellular 2-phosphoglycolate formed during the DNA repair of 3'-phosphoglycolate ends, a major class of DNA lesions induced by oxidative stress. The sequence is that of Phosphoglycolate phosphatase from Xylella fastidiosa (strain Temecula1 / ATCC 700964).